We begin with the raw amino-acid sequence, 300 residues long: Geranylgeranyl diphosphate synthase (300 aa).

The isopentenyl diphosphate site is built by Lys-50, Arg-53, and His-82. Mg(2+)-binding residues include Asp-89 and Asp-95. Arg-100 is a (2E,6E)-farnesyl diphosphate binding site. Arg-101 lines the isopentenyl diphosphate pocket. (2E,6E)-farnesyl diphosphate-binding residues include Lys-186, Thr-187, and Gln-224.

Belongs to the FPP/GGPP synthase family. It depends on Mg(2+) as a cofactor.

It is found in the plastid. It localises to the cyanelle. It carries out the reaction isopentenyl diphosphate + (2E,6E)-farnesyl diphosphate = (2E,6E,10E)-geranylgeranyl diphosphate + diphosphate. The protein operates within isoprenoid biosynthesis; geranylgeranyl diphosphate biosynthesis; geranylgeranyl diphosphate from farnesyl diphosphate and isopentenyl diphosphate: step 1/1. Functionally, catalyzes the condensation of farnesyl diphosphate (FPP) and isopentenyl diphosphate (IPP) to yield geranylgeranyl diphosphate (GGPP) needed for biosynthesis of carotenoids and diterpenes. In Cyanophora paradoxa, this protein is Geranylgeranyl diphosphate synthase (crtE).